We begin with the raw amino-acid sequence, 256 residues long: MLRIADKTFDSHLFTGTGKFASSQLMVEAIRASGSQLVTLAMKRVDLRQHNDAILAPLIEAGVTLLPNTSGAKTAEEAIFAAQLAREALGTNWLKLEIHPDARWLLPDPIETLKAAEALVKQGFVVLPYCGADPVLCKRLEEVGCSAVMPLGAPIGSNQGLETKAMLEIIIQQSTVPVVVDAGIGVPSHAAQALEMGADAVLVNTAIAVADDPVMMATAFRLAVEAGVLARQAVPGSKSSQASATSPLTGFLEALA.

Residue lysine 95 is the Schiff-base intermediate with DXP of the active site. 1-deoxy-D-xylulose 5-phosphate is bound by residues glycine 156, 182–183 (AG), and 204–205 (NT).

The protein belongs to the ThiG family. As to quaternary structure, homotetramer. Forms heterodimers with either ThiH or ThiS.

The protein resides in the cytoplasm. The enzyme catalyses [ThiS sulfur-carrier protein]-C-terminal-Gly-aminoethanethioate + 2-iminoacetate + 1-deoxy-D-xylulose 5-phosphate = [ThiS sulfur-carrier protein]-C-terminal Gly-Gly + 2-[(2R,5Z)-2-carboxy-4-methylthiazol-5(2H)-ylidene]ethyl phosphate + 2 H2O + H(+). Its pathway is cofactor biosynthesis; thiamine diphosphate biosynthesis. Functionally, catalyzes the rearrangement of 1-deoxy-D-xylulose 5-phosphate (DXP) to produce the thiazole phosphate moiety of thiamine. Sulfur is provided by the thiocarboxylate moiety of the carrier protein ThiS. In vitro, sulfur can be provided by H(2)S. In Salmonella paratyphi B (strain ATCC BAA-1250 / SPB7), this protein is Thiazole synthase.